A 157-amino-acid chain; its full sequence is 2-C-methyl-D-erythritol 2,4-cyclodiphosphate synthase (157 aa).

2 residues coordinate a divalent metal cation: aspartate 8 and histidine 10. Residues 8-10 (DVH) and 34-35 (HS) each bind 4-CDP-2-C-methyl-D-erythritol 2-phosphate. Position 42 (histidine 42) interacts with a divalent metal cation. 4-CDP-2-C-methyl-D-erythritol 2-phosphate is bound by residues 56 to 58 (DIG), 61 to 65 (FPDTD), 100 to 106 (AQAPKMA), 132 to 135 (TTTE), phenylalanine 139, and arginine 142.

It belongs to the IspF family. As to quaternary structure, homotrimer. The cofactor is a divalent metal cation.

The catalysed reaction is 4-CDP-2-C-methyl-D-erythritol 2-phosphate = 2-C-methyl-D-erythritol 2,4-cyclic diphosphate + CMP. It participates in isoprenoid biosynthesis; isopentenyl diphosphate biosynthesis via DXP pathway; isopentenyl diphosphate from 1-deoxy-D-xylulose 5-phosphate: step 4/6. In terms of biological role, involved in the biosynthesis of isopentenyl diphosphate (IPP) and dimethylallyl diphosphate (DMAPP), two major building blocks of isoprenoid compounds. Catalyzes the conversion of 4-diphosphocytidyl-2-C-methyl-D-erythritol 2-phosphate (CDP-ME2P) to 2-C-methyl-D-erythritol 2,4-cyclodiphosphate (ME-CPP) with a corresponding release of cytidine 5-monophosphate (CMP). The protein is 2-C-methyl-D-erythritol 2,4-cyclodiphosphate synthase of Pseudomonas fluorescens (strain SBW25).